A 798-amino-acid polypeptide reads, in one-letter code: Metabotropic glutamate receptor-like protein A (798 aa).

Positions 1-23 are cleaved as a signal peptide; the sequence is MNKLKFLIILFITFLFNLKYINS. Residues 24-388 lie on the Extracellular side of the membrane; the sequence is LKQCKISVLL…DYSNSMKLGL (365 aa). Residues Asn-186, Asn-275, and Asn-320 are each glycosylated (N-linked (GlcNAc...) asparagine). A helical membrane pass occupies residues 389–409; sequence TIVSGFCILFCIISMVLVIMF. The Cytoplasmic segment spans residues 410 to 419; the sequence is RHAKIIKSAS. Residues 420–440 form a helical membrane-spanning segment; it reads PIFCLLILFGCIIIFSGCIIF. The Extracellular segment spans residues 441–447; that stretch reads SLSPTDG. The helical transmembrane segment at 448 to 468 threads the bilayer; sequence ICGARVWLLSIGYTIFLGSLL. At 469–494 the chain is on the cytoplasmic side; it reads VKNWRIWLLFDNPKLKKRSITNWKLY. A helical membrane pass occupies residues 495 to 515; that stretch reads PFVAGILAADVLILALWQGLG. Over 516 to 545 the chain is Extracellular; that stretch reads DIRSESRIGIDSLTKYQYANVCSSNDQGSV. The chain crosses the membrane as a helical span at residues 546–566; it reads ALYILLVFHGIKLLAACFISF. At 567 to 580 the chain is on the cytoplasmic side; the sequence is KIKAVDIEEFNESK. Residues 581 to 601 traverse the membrane as a helical segment; it reads PIASSIYIITFCLFIVIPLMV. At 602–609 the chain is on the extracellular side; that stretch reads SPQSVASQ. A helical membrane pass occupies residues 610 to 630; the sequence is VITIVVCAIVTTLISISLLFG. Over 631 to 798 the chain is Cytoplasmic; sequence SKFYMMATQG…NQSEIDPDDV (168 aa). Residues 714-771 are a coiled coil; it reads AEQDSKLDLENQNDENEIENNQNNQNNIVEDCQKVEKLEKDENLEKDENLEKDENLEK. Basic and acidic residues predominate over residues 752–774; it reads EKDENLEKDENLEKDENLEKDNE. Residues 752 to 798 are disordered; that stretch reads EKDENLEKDENLEKDENLEKDNENQSIIQKKRLSKNFNQSEIDPDDV.

In the N-terminal section; belongs to the BMP lipoprotein family. This sequence in the C-terminal section; belongs to the G-protein coupled receptor 3 family. GABA-B receptor subfamily.

It is found in the membrane. The protein localises to the cytoplasm. Its subcellular location is the cell cortex. The protein resides in the perinuclear region. Functionally, may play an important role in the terminal differentiation. The chain is Metabotropic glutamate receptor-like protein A (grlA) from Dictyostelium discoideum (Social amoeba).